The following is a 216-amino-acid chain: Small ribosomal subunit protein uS3c (216 aa).

Residues 43 to 116 form the KH type-2 domain; the sequence is IKNYVQKNMR…RLNIAITRVA (74 aa).

This sequence belongs to the universal ribosomal protein uS3 family. Part of the 30S ribosomal subunit.

The protein resides in the plastid. Its subcellular location is the chloroplast. This Drimys granadensis protein is Small ribosomal subunit protein uS3c (rps3).